A 228-amino-acid chain; its full sequence is Phosphoribosylformylglycinamidine synthase subunit PurQ (228 aa).

One can recognise a Glutamine amidotransferase type-1 domain in the interval 2 to 228 (TVVVVQFGGS…DGKGILQAFG (227 aa)). Catalysis depends on C88, which acts as the Nucleophile. Residues H205 and E207 contribute to the active site.

As to quaternary structure, part of the FGAM synthase complex composed of 1 PurL, 1 PurQ and 2 PurS subunits.

It is found in the cytoplasm. It carries out the reaction N(2)-formyl-N(1)-(5-phospho-beta-D-ribosyl)glycinamide + L-glutamine + ATP + H2O = 2-formamido-N(1)-(5-O-phospho-beta-D-ribosyl)acetamidine + L-glutamate + ADP + phosphate + H(+). The enzyme catalyses L-glutamine + H2O = L-glutamate + NH4(+). Its pathway is purine metabolism; IMP biosynthesis via de novo pathway; 5-amino-1-(5-phospho-D-ribosyl)imidazole from N(2)-formyl-N(1)-(5-phospho-D-ribosyl)glycinamide: step 1/2. In terms of biological role, part of the phosphoribosylformylglycinamidine synthase complex involved in the purines biosynthetic pathway. Catalyzes the ATP-dependent conversion of formylglycinamide ribonucleotide (FGAR) and glutamine to yield formylglycinamidine ribonucleotide (FGAM) and glutamate. The FGAM synthase complex is composed of three subunits. PurQ produces an ammonia molecule by converting glutamine to glutamate. PurL transfers the ammonia molecule to FGAR to form FGAM in an ATP-dependent manner. PurS interacts with PurQ and PurL and is thought to assist in the transfer of the ammonia molecule from PurQ to PurL. The polypeptide is Phosphoribosylformylglycinamidine synthase subunit PurQ (Haloquadratum walsbyi (strain DSM 16790 / HBSQ001)).